A 55-amino-acid chain; its full sequence is Large ribosomal subunit protein bL33 (55 aa).

Belongs to the bacterial ribosomal protein bL33 family.

This is Large ribosomal subunit protein bL33 from Campylobacter fetus subsp. fetus (strain 82-40).